Here is an 889-residue protein sequence, read N- to C-terminus: Alanine--tRNA ligase (889 aa).

4 residues coordinate Zn(2+): His569, His573, Cys671, and His675.

Belongs to the class-II aminoacyl-tRNA synthetase family. Zn(2+) serves as cofactor.

It localises to the cytoplasm. The enzyme catalyses tRNA(Ala) + L-alanine + ATP = L-alanyl-tRNA(Ala) + AMP + diphosphate. Functionally, catalyzes the attachment of alanine to tRNA(Ala) in a two-step reaction: alanine is first activated by ATP to form Ala-AMP and then transferred to the acceptor end of tRNA(Ala). Also edits incorrectly charged Ser-tRNA(Ala) and Gly-tRNA(Ala) via its editing domain. In Parasynechococcus marenigrum (strain WH8102), this protein is Alanine--tRNA ligase.